The primary structure comprises 440 residues: Adenylosuccinate synthetase (440 aa).

Residues 13 to 19 and 41 to 43 each bind GTP; these read GDEGKGK and GHT. Aspartate 14 acts as the Proton acceptor in catalysis. The Mg(2+) site is built by aspartate 14 and glycine 41. IMP contacts are provided by residues 14–17, 39–42, threonine 135, arginine 149, glutamine 230, threonine 245, and arginine 313; these read DEGK and NAGH. Histidine 42 (proton donor) is an active-site residue. Substrate is bound at residue 309-315; sequence TVTKRKR. GTP is bound by residues arginine 315, 341 to 343, and 423 to 425; these read KLD and STG.

The protein belongs to the adenylosuccinate synthetase family. In terms of assembly, homodimer. Requires Mg(2+) as cofactor.

The protein localises to the cytoplasm. It carries out the reaction IMP + L-aspartate + GTP = N(6)-(1,2-dicarboxyethyl)-AMP + GDP + phosphate + 2 H(+). It functions in the pathway purine metabolism; AMP biosynthesis via de novo pathway; AMP from IMP: step 1/2. Plays an important role in the de novo pathway of purine nucleotide biosynthesis. Catalyzes the first committed step in the biosynthesis of AMP from IMP. In Methylobacillus flagellatus (strain ATCC 51484 / DSM 6875 / VKM B-1610 / KT), this protein is Adenylosuccinate synthetase.